A 117-amino-acid polypeptide reads, in one-letter code: Ig heavy chain V region RF (117 aa).

Residues 1-19 (MNFGLRLIFLVLVLKGVLC) form the signal peptide. A framework-1 region spans residues 20–49 (DVKLVESGGGLVKLGGSLKLSCAASGFTFS). A disulfide bridge links C41 with C115. The tract at residues 50-54 (SYYMS) is complementarity-determining-1. The segment at 55–68 (WVRQTPEKRLELVA) is framework-2. A complementarity-determining-2 region spans residues 69–85 (AINSNGGSTYYPDTVKG). Residues 86 to 117 (RFTISRDNAKNTLYLQMSSLKSEDTALYYCAR) form a framework-3 region.

The chain is Ig heavy chain V region RF from Mus musculus (Mouse).